The following is a 166-amino-acid chain: NAD(P)H-quinone oxidoreductase subunit I, chloroplastic (166 aa).

4Fe-4S ferredoxin-type domains are found at residues 55 to 84 and 95 to 124; these read GRIH…VDWK and LNYS…MTEE. 8 residues coordinate [4Fe-4S] cluster: Cys64, Cys67, Cys70, Cys74, Cys104, Cys107, Cys110, and Cys114.

It belongs to the complex I 23 kDa subunit family. NDH is composed of at least 16 different subunits, 5 of which are encoded in the nucleus. [4Fe-4S] cluster serves as cofactor.

The protein localises to the plastid. The protein resides in the chloroplast thylakoid membrane. It carries out the reaction a plastoquinone + NADH + (n+1) H(+)(in) = a plastoquinol + NAD(+) + n H(+)(out). It catalyses the reaction a plastoquinone + NADPH + (n+1) H(+)(in) = a plastoquinol + NADP(+) + n H(+)(out). In terms of biological role, NDH shuttles electrons from NAD(P)H:plastoquinone, via FMN and iron-sulfur (Fe-S) centers, to quinones in the photosynthetic chain and possibly in a chloroplast respiratory chain. The immediate electron acceptor for the enzyme in this species is believed to be plastoquinone. Couples the redox reaction to proton translocation, and thus conserves the redox energy in a proton gradient. This is NAD(P)H-quinone oxidoreductase subunit I, chloroplastic from Chaetymenia peduncularis (Daisy).